We begin with the raw amino-acid sequence, 363 residues long: Peroxisomal (S)-2-hydroxyacid oxidase GLO4 (363 aa).

An FMN hydroxy acid dehydrogenase domain is found at Met1–Glu357. Residues Pro78–Ala80, Ser107, Gln128–Tyr130, and Thr156 each bind FMN. Tyr130 serves as a coordination point for a 2-oxocarboxylate. Arg165 is a binding site for a 2-oxocarboxylate. FMN is bound by residues Lys228 and Ser250. His252 serves as the catalytic Proton acceptor. Arg255 contacts a 2-oxocarboxylate. Residues Asp283–Arg287 and Gly306–Arg307 each bind FMN. Positions Ser361 to Leu363 match the Microbody targeting signal motif.

It belongs to the FMN-dependent alpha-hydroxy acid dehydrogenase family. In terms of assembly, homotetramer. FMN is required as a cofactor.

It localises to the peroxisome. It carries out the reaction a (2S)-2-hydroxycarboxylate + O2 = a 2-oxocarboxylate + H2O2. The enzyme catalyses 2-hydroxydodecanoate + O2 = 2-oxododecanoate + H2O2. The catalysed reaction is 2-hydroxyhexanoate + O2 = 2-oxohexanoate + H2O2. It catalyses the reaction 2-hydroxyoctanoate + O2 = 2-oxooctanoate + H2O2. It carries out the reaction (S)-lactate + O2 = pyruvate + H2O2. The protein operates within lipid metabolism; fatty acid metabolism. In terms of biological role, oxidase that catalyzes the oxidation of a broad range of 2-hydroxyacids to the corresponding 2-oxoacids, with a reduction of O2 to H2O2. Displays the highest activity with the long-chain fatty acid 2-hydroxydodecanoate and has intermediate activity with 2-hydroxyhexanoate, 2-hydroxyoctanote, and the short-chain hydroxyacid (S)-lactate (L-lactate). With much lower activity, it can also use glycolate, leucic acid, valic acid, and isoleucic acid as substrates in vitro. Cannot use 2-hydroxyhexadecanoate or D-lactate as substrates. May be involved in a general medium- and long-chain fatty acid catabolic pathway such as alpha-oxidation. This Arabidopsis thaliana (Mouse-ear cress) protein is Peroxisomal (S)-2-hydroxyacid oxidase GLO4 (GLO4).